A 73-amino-acid polypeptide reads, in one-letter code: Sec-independent protein translocase protein TatA (73 aa).

Residues 1 to 21 (MGLSWQQLLILLLVVVVIFGT) form a helical membrane-spanning segment.

It belongs to the TatA/E family. As to quaternary structure, the Tat system comprises two distinct complexes: a TatABC complex, containing multiple copies of TatA, TatB and TatC subunits, and a separate TatA complex, containing only TatA subunits. Substrates initially bind to the TatABC complex, which probably triggers association of the separate TatA complex to form the active translocon.

Its subcellular location is the cell inner membrane. In terms of biological role, part of the twin-arginine translocation (Tat) system that transports large folded proteins containing a characteristic twin-arginine motif in their signal peptide across membranes. TatA could form the protein-conducting channel of the Tat system. The chain is Sec-independent protein translocase protein TatA from Histophilus somni (strain 129Pt) (Haemophilus somnus).